Reading from the N-terminus, the 1252-residue chain is HEAT repeat-containing protein 6 (1252 aa).

One copy of the HEAT 1 repeat lies at 230 to 269 (PDLLGKSGLLMKLSDVTHSDPEVRRAAVHCMANLCLSVPG). Residues 365–417 (DGRSPVKPQQPESSAARPSANKKKKYKVKPKKTQQGEKAEEEEPYGEVDAAPG) are disordered. Positions 384–396 (ANKKKKYKVKPKK) are enriched in basic residues. Phosphoserine is present on residues Ser471 and Ser474. HEAT repeat units follow at residues 524–562 (ELGS…GSKQ), 586–624 (SSIR…NAPY), and 630–667 (SLLT…THAP). The residue at position 689 (Thr689) is a Phosphothreonine. Ser714 is modified (phosphoserine).

In Rattus norvegicus (Rat), this protein is HEAT repeat-containing protein 6 (Heatr6).